The primary structure comprises 683 residues: Cysteine-rich receptor-like protein kinase 28 (683 aa).

Positions 1 to 24 (MEHVRVIFFFFACVLKIVPFICLA) are cleaved as a signal peptide. Residues 25–288 (QKDKYEFPPG…RTGKGKGGSK (264 aa)) are Extracellular-facing. Gnk2-homologous domains lie at 32–136 (PPGF…NMII) and 142–251 (TTPT…TWRF). 4 N-linked (GlcNAc...) asparagine glycosylation sites follow: asparagine 43, asparagine 47, asparagine 73, and asparagine 153. A disordered region spans residues 263–283 (PAIQPADSPTSAARTERTGKG). A helical membrane pass occupies residues 289–309 (VIVAIVIPIVFVALFAICLCL). The Cytoplasmic portion of the chain corresponds to 310 to 683 (LLKWKKNKSV…DVTVSELSPR (374 aa)). Residues 361 to 641 (FSPENELGRG…ALMLNSYSYT (281 aa)) form the Protein kinase domain. ATP is bound by residues 367–375 (LGRGGFGSV) and lysine 389. The residue at position 434 (tyrosine 434) is a Phosphotyrosine. Aspartate 486 (proton acceptor) is an active-site residue. The residue at position 490 (serine 490) is a Phosphoserine. Threonine 528 carries the post-translational modification Phosphothreonine. At tyrosine 536 the chain carries Phosphotyrosine.

This sequence belongs to the protein kinase superfamily. Ser/Thr protein kinase family. CRK subfamily.

It is found in the membrane. The enzyme catalyses L-seryl-[protein] + ATP = O-phospho-L-seryl-[protein] + ADP + H(+). It carries out the reaction L-threonyl-[protein] + ATP = O-phospho-L-threonyl-[protein] + ADP + H(+). The protein is Cysteine-rich receptor-like protein kinase 28 (CRK28) of Arabidopsis thaliana (Mouse-ear cress).